A 198-amino-acid polypeptide reads, in one-letter code: Uracil phosphoribosyltransferase homolog (198 aa).

Belongs to the UPRTase family.

The protein resides in the plastid. It is found in the chloroplast. The sequence is that of Uracil phosphoribosyltransferase homolog from Pyropia yezoensis (Susabi-nori).